A 239-amino-acid chain; its full sequence is Proteasome activator complex subunit 2 (239 aa).

Ala-2 carries the post-translational modification N-acetylalanine. Position 10 is a phosphoserine (Ser-10). The tract at residues 65–87 is disordered; it reads DIPIPDPPPKDDEMETDKQEKKE. Basic and acidic residues predominate over residues 72-87; sequence PPKDDEMETDKQEKKE.

It belongs to the PA28 family. In terms of assembly, heterodimer of PSME1 and PSME2, which forms a hexameric ring.

Implicated in immunoproteasome assembly and required for efficient antigen processing. The PA28 activator complex enhances the generation of class I binding peptides by altering the cleavage pattern of the proteasome. This chain is Proteasome activator complex subunit 2 (Psme2), found in Mus musculus (Mouse).